Consider the following 361-residue polypeptide: Phospho-N-acetylmuramoyl-pentapeptide-transferase (361 aa).

The next 10 helical transmembrane spans lie at 27–47, 70–90, 97–117, 134–154, 167–187, 199–219, 236–256, 263–283, 288–308, and 338–358; these read ILAS…MIRW, GTPT…CLLW, SLWL…VDDY, YFWQ…NASL, TVTW…IVGS, GLAI…AYAS, TGEL…FLWY, VFMG…VAIV, LVLL…ILQV, and KVIV…LATL.

Belongs to the glycosyltransferase 4 family. MraY subfamily. Mg(2+) is required as a cofactor.

Its subcellular location is the cell inner membrane. The enzyme catalyses UDP-N-acetyl-alpha-D-muramoyl-L-alanyl-gamma-D-glutamyl-meso-2,6-diaminopimeloyl-D-alanyl-D-alanine + di-trans,octa-cis-undecaprenyl phosphate = di-trans,octa-cis-undecaprenyl diphospho-N-acetyl-alpha-D-muramoyl-L-alanyl-D-glutamyl-meso-2,6-diaminopimeloyl-D-alanyl-D-alanine + UMP. It participates in cell wall biogenesis; peptidoglycan biosynthesis. Catalyzes the initial step of the lipid cycle reactions in the biosynthesis of the cell wall peptidoglycan: transfers peptidoglycan precursor phospho-MurNAc-pentapeptide from UDP-MurNAc-pentapeptide onto the lipid carrier undecaprenyl phosphate, yielding undecaprenyl-pyrophosphoryl-MurNAc-pentapeptide, known as lipid I. The polypeptide is Phospho-N-acetylmuramoyl-pentapeptide-transferase (Legionella pneumophila (strain Paris)).